An 804-amino-acid chain; its full sequence is Protein-lysine N-methyltransferase SMYD4 (804 aa).

112–114 (RSA) contacts S-adenosyl-L-methionine. Residues 233 to 574 (SSVGLCIDPL…KGQEILHCYG (342 aa)) enclose the SET domain. The Zn(2+) site is built by C296, C299, C309, C312, C318, C322, H331, and C335. The MYND-type zinc finger occupies 296 to 335 (CHRCLKHTLATVPCDGCSYAKYCSQECLQQAWELYHRTEC). S-adenosyl-L-methionine contacts are provided by residues N427, 539-540 (NH), Y573, and F595.

Belongs to the class V-like SAM-binding methyltransferase superfamily. Interacts (via MYND-type zinc finger) with HDAC1.

It localises to the nucleus. The protein resides in the cytoplasm. The enzyme catalyses L-lysyl-[protein] + S-adenosyl-L-methionine = N(6)-methyl-L-lysyl-[protein] + S-adenosyl-L-homocysteine + H(+). In terms of biological role, protein-lysine N-methyltransferase. Monomethylates PRMT5, modulating its transcriptional activity. May also act as a histone methyltransferase. Plays a critical role in cardiac development. Acts as a key epigenetic regulator of gene expression during cardiac development via its dual activities as a methyltransferase and negative regulator of HDAC1. This Pongo abelii (Sumatran orangutan) protein is Protein-lysine N-methyltransferase SMYD4 (SMYD4).